The primary structure comprises 315 residues: Outer membrane protease IcsP (315 aa).

The signal sequence occupies residues 1–20; the sequence is MKLKFFVLALCVPAIFTTHA. Active-site residues include Asp103, Asp105, Asp230, and His232.

This sequence belongs to the peptidase A26 family.

Its subcellular location is the cell outer membrane. In terms of biological role, protease responsible for the cleavage of IcsA between 'Arg-758' and 'Arg-759', removing the entire alpha domain from IscA localized on the bacterial surface. This proteolytic activity contributes to the maintenance of a tight polar cap of IcsA, which is important to Shigella actin-based motility. This Shigella flexneri protein is Outer membrane protease IcsP (icsP).